The sequence spans 116 residues: uncharacterized protein (116 aa).

Transmembrane regions (helical) follow at residues 8–28 (FMIY…VSFA), 39–59 (GLLL…NPPF), and 75–95 (FLLI…YLMV).

The protein to M.jannaschii MJ1580.

Its subcellular location is the cell membrane. This is an uncharacterized protein from Methanothermobacter thermautotrophicus (strain ATCC 29096 / DSM 1053 / JCM 10044 / NBRC 100330 / Delta H) (Methanobacterium thermoautotrophicum).